The chain runs to 99 residues: Malonate decarboxylase acyl carrier protein (99 aa).

Residue Ser25 is modified to O-(phosphoribosyl dephospho-coenzyme A)serine.

It belongs to the MdcC family. Post-translationally, covalently binds the prosthetic group of malonate decarboxylase.

The protein localises to the cytoplasm. In terms of biological role, subunit of malonate decarboxylase, it is an acyl carrier protein to which acetyl and malonyl thioester residues are bound via a 2'-(5''-phosphoribosyl)-3'-dephospho-CoA prosthetic group and turn over during the catalytic mechanism. The polypeptide is Malonate decarboxylase acyl carrier protein (Pseudomonas paraeruginosa (strain DSM 24068 / PA7) (Pseudomonas aeruginosa (strain PA7))).